We begin with the raw amino-acid sequence, 353 residues long: Serine proteinase inhibitor 1 (353 aa).

This sequence belongs to the serpin family. Poxviruses subfamily.

It is found in the host cytoplasm. Plays a role in mediating viral host range. May act to inhibit a caspase independent form of apoptosis to allow efficient virus replication in infected cells. This chain is Serine proteinase inhibitor 1 (OPG208), found in Vaccinia virus (strain Western Reserve) (VACV).